A 326-amino-acid chain; its full sequence is 4-hydroxythreonine-4-phosphate dehydrogenase (326 aa).

Thr-132 contributes to the substrate binding site. Positions 160, 205, and 260 each coordinate a divalent metal cation. Substrate is bound by residues Lys-268, Asn-277, and Arg-286.

This sequence belongs to the PdxA family. As to quaternary structure, homodimer. Zn(2+) serves as cofactor. The cofactor is Mg(2+). It depends on Co(2+) as a cofactor.

The protein localises to the cytoplasm. It catalyses the reaction 4-(phosphooxy)-L-threonine + NAD(+) = 3-amino-2-oxopropyl phosphate + CO2 + NADH. The protein operates within cofactor biosynthesis; pyridoxine 5'-phosphate biosynthesis; pyridoxine 5'-phosphate from D-erythrose 4-phosphate: step 4/5. Its function is as follows. Catalyzes the NAD(P)-dependent oxidation of 4-(phosphooxy)-L-threonine (HTP) into 2-amino-3-oxo-4-(phosphooxy)butyric acid which spontaneously decarboxylates to form 3-amino-2-oxopropyl phosphate (AHAP). The sequence is that of 4-hydroxythreonine-4-phosphate dehydrogenase from Stenotrophomonas maltophilia (strain R551-3).